We begin with the raw amino-acid sequence, 167 residues long: S-ribosylhomocysteine lyase (167 aa).

Fe cation-binding residues include His-54, His-58, and Cys-128.

This sequence belongs to the LuxS family. In terms of assembly, homodimer. Fe cation serves as cofactor.

The catalysed reaction is S-(5-deoxy-D-ribos-5-yl)-L-homocysteine = (S)-4,5-dihydroxypentane-2,3-dione + L-homocysteine. In terms of biological role, involved in the synthesis of autoinducer 2 (AI-2) which is secreted by bacteria and is used to communicate both the cell density and the metabolic potential of the environment. The regulation of gene expression in response to changes in cell density is called quorum sensing. Catalyzes the transformation of S-ribosylhomocysteine (RHC) to homocysteine (HC) and 4,5-dihydroxy-2,3-pentadione (DPD). This chain is S-ribosylhomocysteine lyase, found in Haemophilus influenzae (strain 86-028NP).